The primary structure comprises 846 residues: DNA mismatch repair protein MutS (846 aa).

610–617 (GPNMGGKS) lines the ATP pocket.

This sequence belongs to the DNA mismatch repair MutS family.

Functionally, this protein is involved in the repair of mismatches in DNA. It is possible that it carries out the mismatch recognition step. This protein has a weak ATPase activity. This is DNA mismatch repair protein MutS from Legionella pneumophila (strain Paris).